The following is a 273-amino-acid chain: Undecaprenyl-diphosphatase (273 aa).

8 helical membrane passes run 13–35 (GLVEGFTEFLPISSTGHLIVFGN), 45–62 (VFEIAIQLGAVLAVVFEY), 82–102 (FVLNLAIAFIPAAVMGLLFGK), 108–128 (LFNPLSVAVMLVLGGLFILWV), 144–164 (ALRPIDALMIGVAQVFALIPG), 186–206 (TEFSFFLAVPMMVAATAYDVL), 219–239 (LILIGFVAAFVSGLVAVKALL), and 250–270 (FAYYRIVFGIAIIILWLSGWI).

The protein belongs to the UppP family.

The protein localises to the cell inner membrane. The catalysed reaction is di-trans,octa-cis-undecaprenyl diphosphate + H2O = di-trans,octa-cis-undecaprenyl phosphate + phosphate + H(+). Its function is as follows. Catalyzes the dephosphorylation of undecaprenyl diphosphate (UPP). Confers resistance to bacitracin. The protein is Undecaprenyl-diphosphatase of Neisseria meningitidis serogroup C (strain 053442).